Here is a 210-residue protein sequence, read N- to C-terminus: MTATETGTAVRRARIERRTRESDIVIDLDLDGTGQVDVDTGVPFFDHMLTALGSHASFDLTVRTKGDVEIEAHHTVEDTAIALGQALGQALGDKKGIRRFGDAFIPMDETLAHAAVDVSGRPYCVHTGEPDHLQHTTIAGNSVPYHTVINRHVFESLAMNARIALHVRVLYGRDPHHITEAQYKAVARALRQAVEPDPRVSGVPSTKGVL.

This sequence belongs to the imidazoleglycerol-phosphate dehydratase family.

The protein localises to the cytoplasm. It carries out the reaction D-erythro-1-(imidazol-4-yl)glycerol 3-phosphate = 3-(imidazol-4-yl)-2-oxopropyl phosphate + H2O. Its pathway is amino-acid biosynthesis; L-histidine biosynthesis; L-histidine from 5-phospho-alpha-D-ribose 1-diphosphate: step 6/9. The chain is Imidazoleglycerol-phosphate dehydratase from Mycobacterium marinum (strain ATCC BAA-535 / M).